A 61-amino-acid polypeptide reads, in one-letter code: MAFLKKSLFLVLFLGVVSLSFCEEEEREEHEEEKREAEAAESAENLISKRVPPGFTPFRVD.

The N-terminal stretch at methionine 1–cysteine 22 is a signal peptide. The propeptide occupies glutamate 23–serine 48. Positions arginine 27–aspartate 61 are disordered.

As to expression, expressed by the skin glands. Expression levels in inguinal glands and granular glands are virtually the same.

It localises to the secreted. Its function is as follows. Induces contraction of rat ileum smooth muscle (EC(50)=2.73 uM) but has no activity towards rat smooth muscle from tail artery, urinary bladder or uterus. Binds to both bradykinin receptor B1 (BDKRB1) and B2 (BDKRB2); the effect via BDKRB1 is stronger. In Physalaemus nattereri (Cuyaba dwarf frog), this protein is [Val1,Thr6]-bradykinyl-Val,Asp.